A 127-amino-acid polypeptide reads, in one-letter code: Riboflavin kinase (127 aa).

A CDP-binding site is contributed by Gly-10–Arg-15. Residues Thr-39 and Asn-41 each coordinate Mg(2+). FMN contacts are provided by Thr-96 and Glu-104. Residue Val-109–Arg-112 coordinates CDP.

This sequence belongs to the archaeal riboflavin kinase family. Mg(2+) serves as cofactor.

The enzyme catalyses riboflavin + CTP = CDP + FMN + H(+). Its pathway is cofactor biosynthesis; FMN biosynthesis; FMN from riboflavin (CTP route): step 1/1. In terms of biological role, catalyzes the CTP-dependent phosphorylation of riboflavin (vitamin B2) to form flavin mononucleotide (FMN). This chain is Riboflavin kinase, found in Methanococcus maripaludis (strain C7 / ATCC BAA-1331).